Reading from the N-terminus, the 321-residue chain is Glucan 1,3-beta-glucosidase (321 aa).

The first 21 residues, 1 to 21 (MQFLSSFVFAALALLPLSAMA), serve as a signal peptide directing secretion. Asn39 and Asn99 each carry an N-linked (GlcNAc...) asparagine glycan. Glu141 functions as the Proton donor in the catalytic mechanism. Residues Asn210, Asn213, and Asn237 are each glycosylated (N-linked (GlcNAc...) asparagine). Catalysis depends on Glu244, which acts as the Nucleophile. N-linked (GlcNAc...) asparagine glycans are attached at residues Asn309 and Asn317.

It belongs to the glycosyl hydrolase 17 family.

It localises to the secreted. Its subcellular location is the cell wall. It carries out the reaction Successive hydrolysis of beta-D-glucose units from the non-reducing ends of (1-&gt;3)-beta-D-glucans, releasing alpha-glucose.. Its function is as follows. Glucanases possibly play a role in cell expansion during growth, in cell-cell fusion during mating, and in spore release during sporulation. This enzyme may be involved in beta-glucan degradation and also function biosynthetically as a transglycosylase. The protein is Glucan 1,3-beta-glucosidase (bgl2) of Schizosaccharomyces pombe (strain 972 / ATCC 24843) (Fission yeast).